Here is an 86-residue protein sequence, read N- to C-terminus: Replication regulatory protein repA2 (86 aa).

Residues 1–14 (MSQTENAVTSSLSQ) are compositionally biased toward polar residues. The disordered stretch occupies residues 1–31 (MSQTENAVTSSLSQKRFVRRGKPMTDSEKQM).

This protein is involved in the determination of copy number in gene replication. It binds to the repA promoter thus inhibiting the synthesis of the mRNA for the initiator protein RepA. This chain is Replication regulatory protein repA2 (repA2), found in Escherichia coli.